A 750-amino-acid chain; its full sequence is Polyribonucleotide nucleotidyltransferase (750 aa).

Mg(2+) is bound by residues D489 and D495. Residues 556-620 (PKMITRRIPN…EGIDKVIAKI (65 aa)) form the KH domain. One can recognise an S1 motif domain in the interval 630 to 701 (GSVYEVKVIK…KTRKDKVSRK (72 aa)). Residues 697–750 (KVSRKALMEKPEGYKERAPRDRDDKRGSRDNNRGRDNRGRDNRRDDRKPRENKD) form a disordered region. The span at 702–750 (ALMEKPEGYKERAPRDRDDKRGSRDNNRGRDNRGRDNRRDDRKPRENKD) shows a compositional bias: basic and acidic residues.

This sequence belongs to the polyribonucleotide nucleotidyltransferase family. Requires Mg(2+) as cofactor.

Its subcellular location is the cytoplasm. The catalysed reaction is RNA(n+1) + phosphate = RNA(n) + a ribonucleoside 5'-diphosphate. Involved in mRNA degradation. Catalyzes the phosphorolysis of single-stranded polyribonucleotides processively in the 3'- to 5'-direction. This chain is Polyribonucleotide nucleotidyltransferase, found in Christiangramia forsetii (strain DSM 17595 / CGMCC 1.15422 / KT0803) (Gramella forsetii).